Here is a 230-residue protein sequence, read N- to C-terminus: Osmotin-like protein PR-5x (230 aa).

The first 25 residues, 1 to 25 (MYTNMGYLTSSFIFFFLALVTYTYA), serve as a signal peptide directing secretion. Disulfide bonds link C34–C229, C76–C86, C91–C97, C145–C217, C150–C200, C158–C168, C172–C181, and C182–C187.

Belongs to the thaumatin family.

Its subcellular location is the secreted. The protein localises to the vacuole. It carries out the reaction Endohydrolysis of (1-&gt;3)- or (1-&gt;4)-linkages in beta-D-glucans when the glucose residue whose reducing group is involved in the linkage to be hydrolyzed is itself substituted at C-3.. Functionally, antifungal protein. May bind to beta-glucans and have beta-1,3-D-glucanase activity. In Solanum lycopersicum (Tomato), this protein is Osmotin-like protein PR-5x.